The sequence spans 509 residues: Solute carrier family 2, facilitated glucose transporter member 4 (509 aa).

Over 1 to 24 (MPSGFQQIGSEDGEPPRQRVTGTL) the chain is Cytoplasmic. Positions 7 to 13 (QIGSEDG) are interaction with SRFBP1. Residue S10 is modified to Phosphoserine. Residues 25–45 (VLAVFSAVLGSLQFGYNIGVI) form a helical membrane-spanning segment. Residues 46 to 81 (NAPQKVIEQSYNETWLGRQGPEGPGSIPPGTLTTLW) lie on the Extracellular side of the membrane. An N-linked (GlcNAc...) asparagine glycan is attached at N57. A helical transmembrane segment spans residues 82–102 (ALSVAIFSVGGMISSFLIGII). At 103 to 111 (SQWLGRKRA) the chain is on the cytoplasmic side. Residues 112–132 (MLFNNALAVLGGTLMGLAKAA) form a helical membrane-spanning segment. At 133-142 (ASYEMLILGR) the chain is on the extracellular side. The helical transmembrane segment at 143 to 163 (FFIGAYSGLTSGLVPMYVGEI) threads the bilayer. Residues 164–171 (APTHLRGA) lie on the Cytoplasmic side of the membrane. A helical membrane pass occupies residues 172-192 (LGTLNQLAIVTGILIAQVLGL). Q177 is a D-glucose binding site. The Extracellular segment spans residues 193–200 (ESMLGTAT). The helical transmembrane segment at 201 to 221 (LWPLLLGITVLPALLQMVLLP) threads the bilayer. Over 222–287 (LCPESPRYLY…LLGSHTHRQP (66 aa)) the chain is Cytoplasmic. The S-palmitoyl cysteine moiety is linked to residue C223. At S274 the chain carries Phosphoserine; by SGK1. The chain crosses the membrane as a helical span at residues 288–308 (LVIAIVLQLSQQLSGINAVFY). Residues 298–299 (QQ) and N304 contribute to the D-glucose site. Residues 309-323 (YSTSIFESAGVEKPA) lie on the Extracellular side of the membrane. Residues 324-344 (YATIGAGVVNTVFTLVSVFLV) traverse the membrane as a helical segment. Residue N333 participates in D-glucose binding. The Cytoplasmic segment spans residues 345–353 (ERAGRRTLH). A helical membrane pass occupies residues 354–374 (LLGLAGMCGCAILMTVALLLL). At 375-384 (ERVPAMSYVS) the chain is on the extracellular side. A helical transmembrane segment spans residues 385–405 (IVAIFGFVAFFEIGPGPIPWF). D-glucose contacts are provided by E396 and W404. Residues 406 to 417 (IVAELFSQGPRP) are Cytoplasmic-facing. A helical membrane pass occupies residues 418–438 (AAMAVAGFSNWTCNFIIGMGF). At 439-445 (QYVADAM) the chain is on the extracellular side. Residues 446-466 (GPYVFLLFAVLLLGFFIFTFL) form a helical membrane-spanning segment. At 467–509 (KVPETRGRTFDQISAVFHRTPSLLEQEVKPSTELEYLGPDEHD) the chain is on the cytoplasmic side. T486 is modified (phosphothreonine). S488 carries the phosphoserine modification. The Dileucine internalization motif signature appears at 489-490 (LL).

It belongs to the major facilitator superfamily. Sugar transporter (TC 2.A.1.1) family. Glucose transporter subfamily. As to quaternary structure, binds to DAXX. Interacts via its N-terminus with SRFBP1. Interacts with NDUFA9. Interacts with TRARG1; the interaction is required for proper SLC2A4 recycling after insulin stimulation. Sumoylated. In terms of processing, palmitoylated. Palmitoylation by ZDHHC7 controls the insulin-dependent translocation of GLUT4 to the plasma membrane.

Its subcellular location is the cell membrane. It is found in the endomembrane system. The protein resides in the cytoplasm. The protein localises to the perinuclear region. The enzyme catalyses D-glucose(out) = D-glucose(in). Insulin-regulated facilitative glucose transporter, which plays a key role in removal of glucose from circulation. Response to insulin is regulated by its intracellular localization: in the absence of insulin, it is efficiently retained intracellularly within storage compartments in muscle and fat cells. Upon insulin stimulation, translocates from these compartments to the cell surface where it transports glucose from the extracellular milieu into the cell. This chain is Solute carrier family 2, facilitated glucose transporter member 4, found in Bos taurus (Bovine).